The primary structure comprises 448 residues: Probable glycine dehydrogenase (decarboxylating) subunit 1 (448 aa).

The protein belongs to the GcvP family. N-terminal subunit subfamily. The glycine cleavage system is composed of four proteins: P, T, L and H. In this organism, the P 'protein' is a heterodimer of two subunits.

It carries out the reaction N(6)-[(R)-lipoyl]-L-lysyl-[glycine-cleavage complex H protein] + glycine + H(+) = N(6)-[(R)-S(8)-aminomethyldihydrolipoyl]-L-lysyl-[glycine-cleavage complex H protein] + CO2. In terms of biological role, the glycine cleavage system catalyzes the degradation of glycine. The P protein binds the alpha-amino group of glycine through its pyridoxal phosphate cofactor; CO(2) is released and the remaining methylamine moiety is then transferred to the lipoamide cofactor of the H protein. In Parvibaculum lavamentivorans (strain DS-1 / DSM 13023 / NCIMB 13966), this protein is Probable glycine dehydrogenase (decarboxylating) subunit 1.